The chain runs to 191 residues: Protein RER1 homolog (191 aa).

A run of 3 helical transmembrane segments spans residues A35 to L55, G57 to L77, and F135 to L155.

This sequence belongs to the RER1 family.

The protein resides in the membrane. Its function is as follows. May be involved in protein transport along the secretory pathway. This Caenorhabditis elegans protein is Protein RER1 homolog (rer-1).